Reading from the N-terminus, the 202-residue chain is Protein-methionine-sulfoxide reductase heme-binding subunit MsrQ (202 aa).

Helical transmembrane passes span 8–28 (LAVF…AWIF), 42–62 (LGLG…LQKL), 75–95 (LGLW…VFIL), 110–130 (PYII…ITSN), 147–167 (LVYL…RADL), and 169–189 (EWTL…PSIA).

It belongs to the MsrQ family. In terms of assembly, heterodimer of a catalytic subunit (MsrP) and a heme-binding subunit (MsrQ). FMN serves as cofactor. Requires heme b as cofactor.

The protein localises to the cell inner membrane. Functionally, part of the MsrPQ system that repairs oxidized periplasmic proteins containing methionine sulfoxide residues (Met-O), using respiratory chain electrons. Thus protects these proteins from oxidative-stress damage caused by reactive species of oxygen and chlorine generated by the host defense mechanisms. MsrPQ is essential for the maintenance of envelope integrity under bleach stress, rescuing a wide series of structurally unrelated periplasmic proteins from methionine oxidation. MsrQ provides electrons for reduction to the reductase catalytic subunit MsrP, using the quinone pool of the respiratory chain. This is Protein-methionine-sulfoxide reductase heme-binding subunit MsrQ from Pseudomonas paraeruginosa (strain DSM 24068 / PA7) (Pseudomonas aeruginosa (strain PA7)).